Here is a 101-residue protein sequence, read N- to C-terminus: Putative antitoxin HigA2 (101 aa).

The region spanning 35 to 90 is the HTH cro/C1-type domain; that stretch reads LRELRAAQSLTQVQVAALAHIRQSRVSSIENGDIGSAQVNTLRKYVSALGGELDIT. The segment at residues 46 to 65 is a DNA-binding region (H-T-H motif); it reads QVQVAALAHIRQSRVSSIEN.

Functionally, putative antitoxin component of a type II toxin-antitoxin (TA) system. Its cognate toxin would be HigB2. The protein is Putative antitoxin HigA2 of Mycobacterium tuberculosis (strain ATCC 25618 / H37Rv).